Consider the following 110-residue polypeptide: Acylphosphatase (110 aa).

Positions 24–110 constitute an Acylphosphatase-like domain; sequence RVRVYVSGRV…SGGARGFEVR (87 aa). Catalysis depends on residues R39 and N57.

It belongs to the acylphosphatase family.

The enzyme catalyses an acyl phosphate + H2O = a carboxylate + phosphate + H(+). The sequence is that of Acylphosphatase (acyP) from Rubrobacter xylanophilus (strain DSM 9941 / JCM 11954 / NBRC 16129 / PRD-1).